The sequence spans 104 residues: Large ribosomal subunit protein eL30 (104 aa).

It belongs to the eukaryotic ribosomal protein eL30 family.

The polypeptide is Large ribosomal subunit protein eL30 (RPL30) (Leishmania major).